A 257-amino-acid chain; its full sequence is Thiazole synthase (257 aa).

Residue lysine 98 is the Schiff-base intermediate with DXP of the active site. Residues glycine 159, 185–186 (AG), and 207–208 (NT) contribute to the 1-deoxy-D-xylulose 5-phosphate site.

It belongs to the ThiG family. Homotetramer. Forms heterodimers with either ThiH or ThiS.

It localises to the cytoplasm. It catalyses the reaction [ThiS sulfur-carrier protein]-C-terminal-Gly-aminoethanethioate + 2-iminoacetate + 1-deoxy-D-xylulose 5-phosphate = [ThiS sulfur-carrier protein]-C-terminal Gly-Gly + 2-[(2R,5Z)-2-carboxy-4-methylthiazol-5(2H)-ylidene]ethyl phosphate + 2 H2O + H(+). It functions in the pathway cofactor biosynthesis; thiamine diphosphate biosynthesis. Functionally, catalyzes the rearrangement of 1-deoxy-D-xylulose 5-phosphate (DXP) to produce the thiazole phosphate moiety of thiamine. Sulfur is provided by the thiocarboxylate moiety of the carrier protein ThiS. In vitro, sulfur can be provided by H(2)S. The chain is Thiazole synthase from Anaeromyxobacter sp. (strain Fw109-5).